The following is a 198-amino-acid chain: UDP-N-acetylglucosamine transferase subunit ALG13 (198 aa).

The protein belongs to the glycosyltransferase 28 family. Heterodimer with ALG14 to form a functional enzyme.

The protein localises to the endoplasmic reticulum. The enzyme catalyses an N-acetyl-alpha-D-glucosaminyl-diphospho-di-trans,poly-cis-dolichol + UDP-N-acetyl-alpha-D-glucosamine = an N,N'-diacetylchitobiosyl-diphospho-di-trans,poly-cis-dolichol + UDP + H(+). In terms of biological role, involved in protein N-glycosylation. Essential for the second step of the dolichol-linked oligosaccharide pathway. The protein is UDP-N-acetylglucosamine transferase subunit ALG13 (ALG13) of Candida glabrata (strain ATCC 2001 / BCRC 20586 / JCM 3761 / NBRC 0622 / NRRL Y-65 / CBS 138) (Yeast).